The primary structure comprises 61 residues: Large ribosomal subunit protein uL30 (61 aa).

Residues 1 to 20 (MSQKKVTVRQVGSPIGRKPE) are disordered.

Belongs to the universal ribosomal protein uL30 family. As to quaternary structure, part of the 50S ribosomal subunit.

The protein is Large ribosomal subunit protein uL30 of Hyphomonas neptunium (strain ATCC 15444).